The chain runs to 294 residues: Acetyl-coenzyme A carboxylase carboxyl transferase subunit beta (294 aa).

Residues 30–294 (IMTKCPECKK…PEVGGEADGE (265 aa)) enclose the CoA carboxyltransferase N-terminal domain. Zn(2+)-binding residues include C34, C37, C53, and C56. A C4-type zinc finger spans residues 34–56 (CPECKKIMYTKELQKNLMVCNYC).

It belongs to the AccD/PCCB family. As to quaternary structure, acetyl-CoA carboxylase is a heterohexamer composed of biotin carboxyl carrier protein (AccB), biotin carboxylase (AccC) and two subunits each of ACCase subunit alpha (AccA) and ACCase subunit beta (AccD). Zn(2+) is required as a cofactor.

The protein resides in the cytoplasm. The catalysed reaction is N(6)-carboxybiotinyl-L-lysyl-[protein] + acetyl-CoA = N(6)-biotinyl-L-lysyl-[protein] + malonyl-CoA. The protein operates within lipid metabolism; malonyl-CoA biosynthesis; malonyl-CoA from acetyl-CoA: step 1/1. Its function is as follows. Component of the acetyl coenzyme A carboxylase (ACC) complex. Biotin carboxylase (BC) catalyzes the carboxylation of biotin on its carrier protein (BCCP) and then the CO(2) group is transferred by the transcarboxylase to acetyl-CoA to form malonyl-CoA. In Listeria monocytogenes serotype 4b (strain F2365), this protein is Acetyl-coenzyme A carboxylase carboxyl transferase subunit beta.